Reading from the N-terminus, the 403-residue chain is 3-oxoacyl-[acyl-carrier-protein] synthase 2 (403 aa).

Residues 1–403 (VITGMGALSP…GGHNAVLVFK (403 aa)) enclose the Ketosynthase family 3 (KS3) domain. Catalysis depends on for beta-ketoacyl synthase activity residues Cys-158, His-297, and His-334.

This sequence belongs to the thiolase-like superfamily. Beta-ketoacyl-ACP synthases family.

It catalyses the reaction a fatty acyl-[ACP] + malonyl-[ACP] + H(+) = a 3-oxoacyl-[ACP] + holo-[ACP] + CO2. The catalysed reaction is (9Z)-hexadecenoyl-[ACP] + malonyl-[ACP] + H(+) = 3-oxo-(11Z)-octadecenoyl-[ACP] + holo-[ACP] + CO2. Its pathway is lipid metabolism; fatty acid biosynthesis. Involved in the type II fatty acid elongation cycle. Catalyzes the elongation of a wide range of acyl-ACP by the addition of two carbons from malonyl-ACP to an acyl acceptor. Can efficiently catalyze the conversion of palmitoleoyl-ACP (cis-hexadec-9-enoyl-ACP) to cis-vaccenoyl-ACP (cis-octadec-11-enoyl-ACP), an essential step in the thermal regulation of fatty acid composition. The sequence is that of 3-oxoacyl-[acyl-carrier-protein] synthase 2 (fabF) from Staphylococcus aureus.